The primary structure comprises 246 residues: YjeF N-terminal domain-containing 3 (246 aa).

The YjeF N-terminal domain occupies 24–234; that stretch reads VATVETELLR…DIQKKYELNL (211 aa).

As to quaternary structure, interacts with apoa1a. Binds to high-density lipoprotein.

In terms of biological role, accelerates cholesterol efflux from endothelial cells to high-density lipoprotein (HDL) and thereby regulates angiogenesis. Orchestrates hematopoietic stem and progenitor cell emergence from the hemogenic endothelium, a type of specialized endothelium manifesting hematopoietic potential. YJEFN3-mediated cholesterol efflux activates endothelial SREBF2, the master transcription factor for cholesterol biosynthesis, which in turn transactivates NOTCH and promotes hematopoietic stem and progenitor cell emergence. This chain is YjeF N-terminal domain-containing 3, found in Danio rerio (Zebrafish).